The primary structure comprises 314 residues: Acetaldehyde dehydrogenase 4 (314 aa).

15 to 18 (SGNI) contacts NAD(+). The active-site Acyl-thioester intermediate is the C133. NAD(+)-binding positions include 164–172 (SAGPGTRAN) and N292.

This sequence belongs to the acetaldehyde dehydrogenase family.

The catalysed reaction is acetaldehyde + NAD(+) + CoA = acetyl-CoA + NADH + H(+). The polypeptide is Acetaldehyde dehydrogenase 4 (Burkholderia lata (strain ATCC 17760 / DSM 23089 / LMG 22485 / NCIMB 9086 / R18194 / 383)).